The following is a 394-amino-acid chain: GDNF family receptor alpha-like (394 aa).

The N-terminal stretch at 1-19 (MLVFIFLAVRLSSENESSS) is a signal peptide. Residues 20–350 (QTNDCAYFMR…LTGFNSPFSG (331 aa)) are Extracellular-facing. N-linked (GlcNAc...) asparagine glycans are attached at residues N65, N101, and N115. 11 cysteine pairs are disulfide-bonded: C132/C190, C139/C145, C156/C168, C163/C211, C192/C199, C221/C292, C228/C234, C245/C276, C253/C259, C270/C317, and C294/C305. Residues 150 to 229 (ALYLKACTAN…TCLSVIHTCR (80 aa)) form a required for interaction with GDF15 region. A helical transmembrane segment spans residues 351–371 (ELIYVVVCMVVTSGILSLVML). The Cytoplasmic segment spans residues 372–394 (KLRIPSKKRDPAPIEIAGAVIIQ).

Belongs to the GDNFR family. Interacts (via the extracellular domain) with GDF15 and RET; receptor of GDF15, mediates cellular signaling through interaction with RET after GDF15-binding. Interaction with RET requires previous GDF15-binding. Cleaved and inactivated by MMP14, inhibiting the GDF15-GFRAL aversive response. As to expression, expressed in the brainstem, restricted to cells in the area postrema and the immediately adjacent region of the nucleus tractus solitarius. Detected at low levels in testis.

It localises to the cell membrane. Functionally, brainstem-restricted receptor for GDF15 hormone, which triggers an aversive response, characterized by nausea, vomiting, and/or loss of appetite in response to various stresses. The aversive response is both required to reduce continuing exposure to those stresses at the time of exposure and to promote avoidance behavior in the future. The GDF15-GFRAL aversive response is triggered by stresses, such as anticancer drugs (camptothecin or cisplatin), cancers or drugs such as metformin. Upon interaction with its ligand, GDF15, mediates the GDF15-induced autophosphorylation and activation of the RET tyrosine kinase receptor, leading to activation of MAPK- and AKT- signaling pathways. Ligand-binding activates GFRAL-expressing neurons localized in the area postrema and nucleus tractus solitarius of the brainstem. The GDF15-GFRAL signal induces expression of genes involved in metabolism, such as lipid metabolism in adipose tissues. The polypeptide is GDNF family receptor alpha-like (Rattus norvegicus (Rat)).